A 237-amino-acid polypeptide reads, in one-letter code: MALPLLEYKPTTQNQRVQSFGTADVNEDTPYIYRLENANSPSEIEELIWAAYRQVFNEQEILKFNRQIGLETQLKNRSITVKDFIRGLAKSERFYQLVVTPNNNYRLVEMSLKRLLGRSPYNEEEKIAWSIQIASKGWGGFVDALIDSTEYEQAFGDNTVPYQRKRLTTDRPFSFTPRYGADYRDRAGIVRPGRMSNWNNSANQNYDGVAILGVLLAISAGMTFLFVLNWLGISSSF.

In terms of domain architecture, PBS-linker spans 11–191; it reads TTQNQRVQSF…DYRDRAGIVR (181 aa). The helical transmembrane segment at 208 to 228 threads the bilayer; sequence GVAILGVLLAISAGMTFLFVL.

Belongs to the phycobilisome linker protein family. Part of a specialized phycobilisome (PBS), a structure that is usually composed of two distinct substructures: a core complex and a number of rods radiating from the core. This protein is part of a core-less PBS rod (called CpcL-PBS). In vegetative cells associated substoichiometrically with photosystem I and phycobiliproteins phycocyanin as well as phycoerythrocyanin in the thylakoid membrane, not found in conventional, hemidiscoidal phycobilisomes.

The protein localises to the cellular thylakoid membrane. Its function is as follows. Rod linker protein, associated with phycocyanin (PC). Linker polypeptides determine the state of aggregation and the location of the disk-shaped phycobiliprotein units within the phycobilisome (PBS) and modulate their spectroscopic properties in order to mediate a directed and optimal energy transfer. Forms a supercomplex with tetrameric photosystem I (PSI) and PC that allows efficient energy transfer from PC to PSI. This protein seems to be in the middle of the PC hexameric rod and may anchor the PC rods at the periphery of PSI tetramers. May be involved in the cyclic electron transport around PSI that provides ATP needed for N(2) fixation in heterocysts. This Nostoc sp. (strain PCC 7120 / SAG 25.82 / UTEX 2576) protein is Photosystem I-associated linker protein CpcL.